A 564-amino-acid polypeptide reads, in one-letter code: Proline--tRNA ligase (564 aa).

It belongs to the class-II aminoacyl-tRNA synthetase family. ProS type 1 subfamily. Homodimer.

It is found in the cytoplasm. It carries out the reaction tRNA(Pro) + L-proline + ATP = L-prolyl-tRNA(Pro) + AMP + diphosphate. Catalyzes the attachment of proline to tRNA(Pro) in a two-step reaction: proline is first activated by ATP to form Pro-AMP and then transferred to the acceptor end of tRNA(Pro). As ProRS can inadvertently accommodate and process non-cognate amino acids such as alanine and cysteine, to avoid such errors it has two additional distinct editing activities against alanine. One activity is designated as 'pretransfer' editing and involves the tRNA(Pro)-independent hydrolysis of activated Ala-AMP. The other activity is designated 'posttransfer' editing and involves deacylation of mischarged Ala-tRNA(Pro). The misacylated Cys-tRNA(Pro) is not edited by ProRS. The protein is Proline--tRNA ligase of Xylella fastidiosa (strain 9a5c).